A 211-amino-acid chain; its full sequence is Arginine exporter protein ArgO (211 aa).

The next 6 membrane-spanning stretches (helical) occupy residues 1-21 (MLSYYFQGLVLGAAMILPLGP), 37-57 (LMIAMLCAVSDLLLICAGIFG), 68-88 (LLALVTWGGVAFLLWYGFGAL), 111-131 (IIATMLAVTWLNPHVYLDTFV), 147-167 (WFALGTVSASFLWFFGLALLA), and 186-206 (LVGLVMWFIAFQLAKEGIHHI).

Belongs to the LysE/ArgO transporter (TC 2.A.75) family.

Its subcellular location is the cell inner membrane. The enzyme catalyses L-arginine(in) = L-arginine(out). Its function is as follows. Involved in the export of arginine. Important to control the intracellular level of arginine and the correct balance between arginine and lysine. In Enterobacter sp. (strain 638), this protein is Arginine exporter protein ArgO.